Reading from the N-terminus, the 227-residue chain is Transmembrane emp24 domain-containing protein 4 (227 aa).

Positions 1-29 (MAGVGVGPLQGMVRFGLLVLTVCAACARG) are cleaved as a signal peptide. Residues 30-194 (LYFHIGETEK…RLTSESTNQR (165 aa)) lie on the Lumenal side of the membrane. Residues 39–137 (KRCFIEEIPD…KLRVHLDIQV (99 aa)) form the GOLD domain. N-linked (GlcNAc...) asparagine glycosylation is present at Asn-117. The stretch at 147-176 (IAAKDKLTELQLRARQLLDQVEQIQKEQDY) forms a coiled coil. The chain crosses the membrane as a helical span at residues 195 to 212 (VLWWSIAQTVILILTGIW). The Cytoplasmic portion of the chain corresponds to 213-227 (QMRHLKSFFEAKKLV). The COPII vesicle coat-binding motif lies at 220–221 (FF). The COPI vesicle coat-binding signature appears at 220 to 227 (FFEAKKLV).

The protein belongs to the EMP24/GP25L family.

The protein resides in the endoplasmic reticulum membrane. In terms of biological role, involved in vesicular protein trafficking, mainly in the early secretory pathway. Involved in the maintenance of the Golgi apparatus. Appears to play a role in the biosynthesis of secreted cargo including processing. Involved in endoplasmic reticulum stress response. May play a role in the regulation of heat-shock response and apoptosis. This Mus musculus (Mouse) protein is Transmembrane emp24 domain-containing protein 4 (Tmed4).